The primary structure comprises 751 residues: ATP-dependent DNA helicase Hel308 (751 aa).

Residues glutamine 20 and 39–46 (IPTASGKT) each bind ATP. Residues 26 to 196 (EGLLDKSKNF…WLNAKLVTDE (171 aa)) form the Helicase ATP-binding domain. Positions 143–146 (DEIH) match the DEAH box motif. Residues 235 to 435 (NLTDLIVDSV…VLRVHILGLI (201 aa)) enclose the Helicase C-terminal domain.

The protein belongs to the helicase family. Hel308 subfamily. In terms of assembly, monomer.

It catalyses the reaction Couples ATP hydrolysis with the unwinding of duplex DNA by translocating in the 3'-5' direction.. The enzyme catalyses ATP + H2O = ADP + phosphate + H(+). DNA-dependent ATPase and 3'-5' DNA helicase that may be involved in repair of stalled replication forks. The sequence is that of ATP-dependent DNA helicase Hel308 from Methanococcus vannielii (strain ATCC 35089 / DSM 1224 / JCM 13029 / OCM 148 / SB).